A 152-amino-acid chain; its full sequence is MMGGGQQQLQQLSQELQALDEEIEALEVEIDDHREEQSDIDDAIEAIETLDSGSTVQVPLGGGAYVRAEVQDIDEIIVSLGGNYSAEQSEEDAIDVLGRKRDALDDRIEETQEEVDELESESQELEQQAQQMQQQMQQQQMQQMQQSQGDEE.

The interval 110 to 152 is disordered; that stretch reads ETQEEVDELESESQELEQQAQQMQQQMQQQQMQQMQQSQGDEE. Residues 111–124 show a composition bias toward acidic residues; sequence TQEEVDELESESQE. The span at 125–152 shows a compositional bias: low complexity; the sequence is LEQQAQQMQQQMQQQQMQQMQQSQGDEE.

Belongs to the prefoldin alpha subunit family. As to quaternary structure, heterohexamer of two alpha and four beta subunits.

The protein resides in the cytoplasm. In terms of biological role, molecular chaperone capable of stabilizing a range of proteins. Seems to fulfill an ATP-independent, HSP70-like function in archaeal de novo protein folding. This Halorubrum lacusprofundi (strain ATCC 49239 / DSM 5036 / JCM 8891 / ACAM 34) protein is Prefoldin subunit alpha.